The sequence spans 465 residues: Monogalactosyldiacylglycerol synthase 3, chloroplastic (465 aa).

UDP contacts are provided by residues His86, Arg255, 365–369 (GTIAE), and Glu387.

This sequence belongs to the glycosyltransferase 28 family. Expressed mainly in roots. Detected in flowers, leaves, stems, siliques and pollen tubes.

The protein resides in the plastid. The protein localises to the chloroplast outer membrane. It carries out the reaction a 1,2-diacyl-sn-glycerol + UDP-alpha-D-galactose = a 1,2-diacyl-3-O-(beta-D-galactosyl)-sn-glycerol + UDP + H(+). The catalysed reaction is 1,2-di-(9Z,12Z-octadecadienoyl)-sn-glycerol + UDP-alpha-D-galactose = 1,2-di-(9Z,12Z-octadecadienoyl)-3-beta-D-galactosyl-sn-glycerol + UDP + H(+). The enzyme catalyses 1-(9Z-octadecenoyl)-2-hexadecanoyl-sn-glycerol + UDP-alpha-D-galactose = 1-(9Z-octadecenoyl)-2-hexadecanoyl-3-beta-D-galactosyl-sn-glycerol + UDP + H(+). It catalyses the reaction 1,2-di-(9Z-octadecenoyl)-sn-glycerol + UDP-alpha-D-galactose = 1,2-di-(9Z-octadecenoyl)-3-beta-D-galactosyl-sn-glycerol + UDP + H(+). Inhibited by galvestine-1. Its function is as follows. Involved in the synthesis of monogalactosyldiacylglycerol, the major structural component of photosynthetic membranes and in the chloroplast envelope biogenesis. Can use both prokaryotic (18:1/16:0) or eukaryotic (18:2/18:2) 1,2-diacylglycerol species, but operates with some preference for the eukaryotic one. Plays a minor role in galactolipid synthesis in chloroplasts. Is essential for membrane lipid remodeling in phosphate-starved roots. Acts as the major factor involved in digalactosyldiacylglycerol (DGDG) biosynthesis in phosphate-starved roots. Does not seem to be required for plant growth under nutrient-sufficient conditions. Required for membrane lipid remodeling in plants grown in acidic conditions. This is Monogalactosyldiacylglycerol synthase 3, chloroplastic from Arabidopsis thaliana (Mouse-ear cress).